The chain runs to 122 residues: Large ribosomal subunit protein uL14 (122 aa).

The protein belongs to the universal ribosomal protein uL14 family. In terms of assembly, part of the 50S ribosomal subunit. Forms a cluster with proteins L3 and L19. In the 70S ribosome, L14 and L19 interact and together make contacts with the 16S rRNA in bridges B5 and B8.

Its function is as follows. Binds to 23S rRNA. Forms part of two intersubunit bridges in the 70S ribosome. The protein is Large ribosomal subunit protein uL14 of Acidiphilium cryptum (strain JF-5).